A 178-amino-acid chain; its full sequence is Transcription factor E (178 aa).

The HTH TFE/IIEalpha-type domain occupies 3 to 86 (AHEALAEIAG…YWRITDEPIQ (84 aa)).

Belongs to the TFE family. Monomer. Interaction with RNA polymerase subunits RpoF and RpoE is necessary for Tfe stimulatory transcription activity. Able to interact with Tbp and RNA polymerase in the absence of DNA promoter. Interacts both with the preinitiation and elongation complexes.

In terms of biological role, transcription factor that plays a role in the activation of archaeal genes transcribed by RNA polymerase. Facilitates transcription initiation by enhancing TATA-box recognition by TATA-box-binding protein (Tbp), and transcription factor B (Tfb) and RNA polymerase recruitment. Not absolutely required for transcription in vitro, but particularly important in cases where Tbp or Tfb function is not optimal. It dynamically alters the nucleic acid-binding properties of RNA polymerases by stabilizing the initiation complex and destabilizing elongation complexes. Seems to translocate with the RNA polymerase following initiation and acts by binding to the non template strand of the transcription bubble in elongation complexes. In Thermofilum pendens (strain DSM 2475 / Hrk 5), this protein is Transcription factor E.